The following is a 217-amino-acid chain: Large ribosomal subunit protein bL25 (217 aa).

Belongs to the bacterial ribosomal protein bL25 family. CTC subfamily. As to quaternary structure, part of the 50S ribosomal subunit; part of the 5S rRNA/L5/L18/L25 subcomplex. Contacts the 5S rRNA. Binds to the 5S rRNA independently of L5 and L18.

This is one of the proteins that binds to the 5S RNA in the ribosome where it forms part of the central protuberance. In Methylobacterium sp. (strain 4-46), this protein is Large ribosomal subunit protein bL25.